The following is a 213-amino-acid chain: Neuromodulin (213 aa).

The interval 1–213 (MLCCIRRTKP…AEEAGKDQNV (213 aa)) is disordered. Residues Cys-3 and Cys-4 are each lipidated (S-palmitoyl cysteine). A compositionally biased stretch (basic and acidic residues) spans 9–33 (KPVEKNEEADQEIKQDGTKPEENAH). In terms of domain architecture, IQ spans 32–61 (AHKAATKIQASFRGHITRKKMKDEDKDGEN). Acidic residues predominate over residues 57–73 (KDGENDTAPDESAETEE). Over residues 74–86 (KEERVSPSEEKPV) the composition is skewed to basic and acidic residues. Residues 102–122 (PNSPAAEAPPTAATDSAPSDT) show a composition bias toward low complexity. Residues 157-169 (EKEEEEEEEEEEE) are compositionally biased toward acidic residues. Over residues 191-213 (QTDKKEALDDSKPAEEAGKDQNV) the composition is skewed to basic and acidic residues.

The protein belongs to the neuromodulin family. As to quaternary structure, binds calmodulin with a greater affinity in the absence of Ca(2+) than in its presence. In terms of processing, palmitoylated. Palmitoylation is essential for plasma membrane association.

The protein resides in the cell membrane. The protein localises to the cell projection. It localises to the growth cone membrane. It is found in the synapse. Its subcellular location is the filopodium membrane. This protein is associated with nerve growth. It is a major component of the motile 'growth cones' that form the tips of elongating axons. Plays a role in axonal and dendritic filopodia induction. The chain is Neuromodulin (gap43) from Carassius auratus (Goldfish).